Reading from the N-terminus, the 833-residue chain is DNA ligase (833 aa).

Residues 35 to 39 (DVEYD), 84 to 85 (SL), and E115 each bind NAD(+). Catalysis depends on K117, which acts as the N6-AMP-lysine intermediate. Residues R138, E175, K292, and K316 each contribute to the NAD(+) site. The Zn(2+) site is built by C410, C413, C428, and C434. Residues 750–833 (VQAGPLDGQT…AFLSEHGQAV (84 aa)) form the BRCT domain.

Belongs to the NAD-dependent DNA ligase family. LigA subfamily. Requires Mg(2+) as cofactor. Mn(2+) serves as cofactor.

It carries out the reaction NAD(+) + (deoxyribonucleotide)n-3'-hydroxyl + 5'-phospho-(deoxyribonucleotide)m = (deoxyribonucleotide)n+m + AMP + beta-nicotinamide D-nucleotide.. In terms of biological role, DNA ligase that catalyzes the formation of phosphodiester linkages between 5'-phosphoryl and 3'-hydroxyl groups in double-stranded DNA using NAD as a coenzyme and as the energy source for the reaction. It is essential for DNA replication and repair of damaged DNA. This chain is DNA ligase, found in Xanthomonas campestris pv. campestris (strain 8004).